A 391-amino-acid polypeptide reads, in one-letter code: MTLNVYHIIFIHNLWYGMAHIITLPKRRNCSLSCPSRVRGPEHLAVDHTLSSPALAKPNLPVLSTPEPCSPPANPYPRHQIQFPQQYTPYCTHNEGFINSPHSQSYQYIHFIHISPLPRMNTTHVPEPHRTEQHTENQRHWRKILDIAPIVSIAFPAAMYFIFTKDSFEDSLFLRFITLLLPFSYSAVQYALLHTNWKSHNKPEGILQSMLYYTLNLLLLAFTIISILSIIAFTLAEWEGDDWENNDDPIIFSFILPSFTVPLTYLLSVSCRLVPGHIGFTDTGINVLIDILILLCSTGNLVPAFDEVKHCYYFAIISSILILIRLLREKHGPSEKSALPTAPWRVAILVLILIFAALIYLFMMWVSIDILSDHFALLARARSTPVSKPRQ.

The protein belongs to the UPF0328 family.

This is UPF0328 protein ECU06_1650 from Encephalitozoon cuniculi (strain GB-M1) (Microsporidian parasite).